The primary structure comprises 84 residues: U4-theraphotoxin-Hhn1ac (84 aa).

The signal sequence occupies residues 1–22 (MKVTLIAILTCAAVLVLHTTAA). Positions 23–47 (EELEESQLMEVGMPDTELAAVDEER) are excised as a propeptide. Disulfide bonds link C51–C65, C55–C76, and C70–C81.

It belongs to the neurotoxin 12 (Hwtx-2) family. 02 (Hwtx-2) subfamily. Expressed by the venom gland.

The protein resides in the secreted. Its function is as follows. Postsynaptic neurotoxin. In Cyriopagopus hainanus (Chinese bird spider), this protein is U4-theraphotoxin-Hhn1ac.